Reading from the N-terminus, the 276-residue chain is Ribosomal RNA small subunit methyltransferase A (276 aa).

Residues Asn-27, Leu-29, Gly-54, Glu-75, Asp-101, and Asn-123 each contribute to the S-adenosyl-L-methionine site.

Belongs to the class I-like SAM-binding methyltransferase superfamily. rRNA adenine N(6)-methyltransferase family. RsmA subfamily.

It is found in the cytoplasm. It catalyses the reaction adenosine(1518)/adenosine(1519) in 16S rRNA + 4 S-adenosyl-L-methionine = N(6)-dimethyladenosine(1518)/N(6)-dimethyladenosine(1519) in 16S rRNA + 4 S-adenosyl-L-homocysteine + 4 H(+). Its function is as follows. Specifically dimethylates two adjacent adenosines (A1518 and A1519) in the loop of a conserved hairpin near the 3'-end of 16S rRNA in the 30S particle. May play a critical role in biogenesis of 30S subunits. This Bartonella bacilliformis (strain ATCC 35685 / KC583 / Herrer 020/F12,63) protein is Ribosomal RNA small subunit methyltransferase A.